We begin with the raw amino-acid sequence, 357 residues long: Protein MGF 360-8L (357 aa).

This sequence belongs to the asfivirus MGF 360 family.

Plays a role in virus cell tropism, and may be required for efficient virus replication in macrophages. This African swine fever virus (isolate Tick/South Africa/Pretoriuskop Pr4/1996) (ASFV) protein is Protein MGF 360-8L.